A 726-amino-acid chain; its full sequence is Sensory/regulatory protein RpfC (726 aa).

The next 5 membrane-spanning stretches (helical) occupy residues 23 to 40 (NLIR…LGWR), 52 to 72 (TWLI…AILL), 95 to 115 (IMAI…WVTI), 128 to 148 (AATA…PYWK), and 152 to 172 (YLSW…DSLL). In terms of domain architecture, Histidine kinase spans 195-417 (NMSHEFRTPL…VFWFELPMAI (223 aa)). Position 198 is a phosphohistidine; by autocatalysis (His-198). The Response regulatory domain occupies 463–581 (RMLVADDHEA…KLLDTLADLA (119 aa)). A 4-aspartylphosphate modification is found at Asp-512. An HPt domain is found at 618–711 (GEEFERQFVR…KAGKDALDAR (94 aa)). His-657 carries the phosphohistidine modification.

At low DSF concentrations, interacts with RpfF. In terms of processing, autophosphorylated. Activation may require a sequential transfer of a phosphate group from a His in the primary transmitter domain, to an Asp in the receiver domain and to a His in the secondary transmitter domain.

It localises to the cell inner membrane. The enzyme catalyses ATP + protein L-histidine = ADP + protein N-phospho-L-histidine.. Binding of DSF to the sensor region causes allosteric change, which facilitates RpfC autophosphorylation. Functionally, hybrid sensor kinase that regulates diverse biological functions through two distinct molecular mechanisms. At low cell density, the extracellular concentration of the diffusible signaling factor (DSF) is below a threshold, and unphosphorylated RpfC is involved in the negative regulation of DSF synthesis, via direct interaction with the DSF synthase RpfF. Interaction prevents synthesis of DSF, which remains at a basal level. This activity does not involve the phosphorelay mechanism and is not dependent on RpfG. Is also member of the two-component regulatory system RpfG/RpfC, which is involved in the perception and response to DSF, which is essential for cell-cell signaling. At high cell density, the level of extracellular DSF increases and binding of DSF to the sensor region of RpfC causes autophosphorylation of RpfC, which results in the release of RpfF and the activation of RpfG via a four-step phosphorelay. Activation of RpfG leads to the positive regulation of biofilm dispersal and the production of virulence factors. This is Sensory/regulatory protein RpfC (rpfC) from Xanthomonas campestris pv. campestris (strain ATCC 33913 / DSM 3586 / NCPPB 528 / LMG 568 / P 25).